Here is a 783-residue protein sequence, read N- to C-terminus: FYN-binding protein 1 (783 aa).

2 stretches are compositionally biased toward polar residues: residues 1-18 and 25-45; these read MAKYNTGGNPTEDVSVNS and GPNSSSGIQARKNLFNNQGNA. The interval 1 to 502 is disordered; sequence MAKYNTGGNP…KEKKEQEIKK (502 aa). N6-acetyllysine is present on Lys3. Phosphoserine is present on residues Ser28 and Ser46. Over residues 69-79 the composition is skewed to basic and acidic residues; the sequence is SSEEKPDKEPK. Ser225 carries the phosphoserine modification. Basic and acidic residues-rich tracts occupy residues 240–252 and 278–290; these read PAREDSENKDHAG and NGEEKKEDRKIDA. Ser329 bears the Phosphoserine mark. The span at 345–363 shows a compositional bias: pro residues; it reads KPLPPLFTLGPPPPKPNRP. Positions 348-448 are interaction with SKAP1; it reads PPLFTLGPPP…QDGVTHSDGA (101 aa). Positions 374–387 are enriched in polar residues; the sequence is TSSGNSTSKGQTSY. The span at 392–424 shows a compositional bias: pro residues; that stretch reads LPPPPPSHPASQPPLPASHPSQPPVPSLPPRNI. Over residues 451-465 the composition is skewed to acidic residues; the sequence is LDEEQDSEGETYEDI. Positions 456–507 form a coiled coil; it reads DSEGETYEDIEASKEREKKREKEEKKRLELEKKEQKEKEKKEQEIKKKFKLT. The residue at position 457 (Ser457) is a Phosphoserine. The short motif at 462–465 is the SH2-binding element; the sequence is YEDI. Over residues 466–501 the composition is skewed to basic and acidic residues; sequence EASKEREKKREKEEKKRLELEKKEQKEKEKKEQEIK. The Nuclear localization signal motif lies at 469–505; it reads KEREKKREKEEKKRLELEKKEQKEKEKKEQEIKKKFK. Residues 511 to 572 form the SH3 1 domain; it reads QVIHLAKACC…KTTAVEIDYD (62 aa). Tyr571 carries the phosphotyrosine modification. 2 positions are modified to phosphoserine: Ser573 and Ser580. An SH2-binding; to LCP2 motif is present at residues 595–598; the sequence is YDDV. The segment at 598–678 is disordered; it reads VAEQDDISSH…GTNVGKAKTE (81 aa). Acidic residues-rich tracts occupy residues 620-635 and 646-656; these read PDDDIYDGIEEEDADD and MGDEVYDDVDT. Residues 625–628 carry the SH2-binding; to FYN motif; that stretch reads YDGI. At Tyr651 the chain carries Phosphotyrosine. A Nuclear localization signal motif is present at residues 674 to 700; it reads KAKTEEKDLKKLKKQEKEEKDFRKKFK. One can recognise an SH3 2 domain in the interval 700–768; sequence KYDGEIRVLY…LRSYLADNDG (69 aa).

In terms of assembly, part of a complex consisting of SKAP2, FYB1 and PTPNS1. Part of a complex consisting of SKAP2, FYB1 and LILRB3. Part of a complex consisting of SKAP1, FYB1 and CLNK. Interacts with CLNK (via its SH2 domain); this interaction allows SKAP1 and FYB1 to recruit FYN to the complex, thus promoting the phosphorylation of CLNK by FYN. Interacts with FYN. Interacts with LCP2. Interacts with SKAP1. Interacts with SKAP2. Interacts with FASLG. Interacts with EVL. Interacts with TMEM47. Interacts with LCK. In terms of processing, T-cell receptor ligation leads to increased tyrosine phosphorylation. Expressed in hematopoietic tissues such as myeloid and T-cells, spleen and thymus. Not expressed in B-cells, nor in non-lymphoid tissues.

The protein localises to the cytoplasm. It localises to the nucleus. It is found in the cell junction. Functionally, acts as an adapter protein of the FYN and LCP2 signaling cascades in T-cells. May play a role in linking T-cell signaling to remodeling of the actin cytoskeleton. Modulates the expression of IL2. Involved in platelet activation. Prevents the degradation of SKAP1 and SKAP2. May be involved in high affinity immunoglobulin epsilon receptor signaling in mast cells. This Homo sapiens (Human) protein is FYN-binding protein 1.